The chain runs to 433 residues: Glucose-1-phosphate adenylyltransferase (433 aa).

Residues Tyr117, Gly182, Glu197–Lys198, and Ser215 contribute to the alpha-D-glucose 1-phosphate site.

It belongs to the bacterial/plant glucose-1-phosphate adenylyltransferase family. Homotetramer.

The catalysed reaction is alpha-D-glucose 1-phosphate + ATP + H(+) = ADP-alpha-D-glucose + diphosphate. The protein operates within glycan biosynthesis; glycogen biosynthesis. In terms of biological role, involved in the biosynthesis of ADP-glucose, a building block required for the elongation reactions to produce glycogen. Catalyzes the reaction between ATP and alpha-D-glucose 1-phosphate (G1P) to produce pyrophosphate and ADP-Glc. The polypeptide is Glucose-1-phosphate adenylyltransferase (Nitrosomonas europaea (strain ATCC 19718 / CIP 103999 / KCTC 2705 / NBRC 14298)).